The primary structure comprises 301 residues: Porin (301 aa).

In terms of assembly, homotrimer.

Its subcellular location is the cell outer membrane. In terms of biological role, forms channels that allow the passive diffusion of small hydrophilic solutes up to an exclusion limit of about 0.6 kDa. The sequence is that of Porin from Rhodobacter capsulatus (Rhodopseudomonas capsulata).